The chain runs to 86 residues: Phosphocarrier protein HPr (86 aa).

Residues methionine 1–glutamate 86 form the HPr domain. Histidine 15 acts as the Pros-phosphohistidine intermediate in catalysis.

Belongs to the HPr family.

The protein localises to the cytoplasm. General (non sugar-specific) component of the phosphoenolpyruvate-dependent sugar phosphotransferase system (sugar PTS). This major carbohydrate active-transport system catalyzes the phosphorylation of incoming sugar substrates concomitantly with their translocation across the cell membrane. The phosphoryl group from phosphoenolpyruvate (PEP) is transferred to the phosphoryl carrier protein HPr by enzyme I. Phospho-HPr then transfers it to the PTS EIIA domain. The protein is Phosphocarrier protein HPr (ptsH) of Borreliella burgdorferi (strain ATCC 35210 / DSM 4680 / CIP 102532 / B31) (Borrelia burgdorferi).